The primary structure comprises 458 residues: MMLIPMASVMAVTEPKWVSVWSRFLWVTLLSMVLGSLLALLLPLGAVEEQCLAVLKGLYLLRSKPDRAQHAATKCTSPSTELSITSRGATLLVAKTKASPAGKLEARAALNQALEMKRQGKREKAQKLFMHALKMDPDFVDALTEFGIFSEEDKDIIQADYLYTRALTISPYHEKALVNRDRTLPLVEEIDQRYFSIIDSKVKKVMSIPKGNSALRRVMEETYYHHIYHTVAIEGNTLTLSEIRHILETRYAVPGKSLEEQNEVIGMHAAMKYINTTLVSRIGSVTISDVLEIHRRVLGYVDPVEAGRFRTTQVLVGHHIPPHPQDVEKQMQEFVQWLNSEEAMNLHPVEFAALAHYKLVYIHPFIDGNGRTSRLLMNLILMQAGYPPITIRKEQRSDYYHVLEAANEGDVRPFIRFIAKCTETTLDTLLFATTEYSVALPEAQPNHSGFKETLPVKP.

Over 1 to 23 (MMLIPMASVMAVTEPKWVSVWSR) the chain is Cytoplasmic. A helical; Signal-anchor for type II membrane protein transmembrane segment spans residues 24–44 (FLWVTLLSMVLGSLLALLLPL). Residues 45–458 (GAVEEQCLAV…GFKETLPVKP (414 aa)) are Lumenal-facing. S79 carries the post-translational modification O-AMP-serine; by autocatalysis. O-AMP-threonine; by autocatalysis is present on T80. TPR repeat units lie at residues 106–139 (ARAALNQALEMKRQGKREKAQKLFMHALKMDPDF) and 140–173 (VDALTEFGIFSEEDKDIIQADYLYTRALTISPYH). T183 carries the O-AMP-threonine; by autocatalysis modification. The Inhibitory (S/T)XXXE(G/N) motif signature appears at 230 to 235 (TVAIEG). E234 contributes to the ATP binding site. N-linked (GlcNAc...) asparagine glycosylation occurs at N275. A Fido domain is found at 285–420 (VTISDVLEIH…VRPFIRFIAK (136 aa)). 316-319 (VGHH) is a binding site for ATP. Residue H363 is part of the active site. Residues 367 to 374 (DGNGRTSR), 399 to 400 (YY), and N407 contribute to the ATP site. N-linked (GlcNAc...) asparagine glycosylation occurs at N446.

The protein belongs to the fic family. Homodimer. Interacts with HD. It depends on Mg(2+) as a cofactor. The cofactor is Mn(2+). Post-translationally, auto-AMPylated in vitro; it is unclear whether auto-AMPylation is relevant in vivo. In terms of processing, N-glycosylated; predominantly glycosylated at Asn-275. In terms of tissue distribution, ubiquitous.

Its subcellular location is the endoplasmic reticulum membrane. The enzyme catalyses L-tyrosyl-[protein] + ATP = O-(5'-adenylyl)-L-tyrosyl-[protein] + diphosphate. It catalyses the reaction 3-O-(5'-adenylyl)-L-threonyl-[protein] + H2O = L-threonyl-[protein] + AMP + H(+). The catalysed reaction is L-threonyl-[protein] + ATP = 3-O-(5'-adenylyl)-L-threonyl-[protein] + diphosphate. With respect to regulation, the side chain of Glu-234 determines which of the two opposing activities (AMPylase or de-AMPylase) will take place. In response to endoplasmic reticulum stress, mediates de-AMPylase activity. Adenylyltransferase activity is inhibited by the inhibitory helix present at the N-terminus: Glu-234 binds ATP and competes with ATP-binding at Arg-374, thereby preventing adenylyltransferase activity. In unstressed cells, disengagement of Glu-234 promotes adenylyltransferase activity. Activation dissociates ATP-binding from Glu-234, allowing ordered binding of the entire ATP moiety with the alpha-phosphate in an orientation that is productive for accepting an incoming target hydroxyl side chain. Protein that can both mediate the addition of adenosine 5'-monophosphate (AMP) to specific residues of target proteins (AMPylation), and the removal of the same modification from target proteins (de-AMPylation), depending on the context. The side chain of Glu-231 determines which of the two opposing activities (AMPylase or de-AMPylase) will take place. Acts as a key regulator of the ERN1/IRE1-mediated unfolded protein response (UPR) by mediating AMPylation or de-AMPylation of HSPA5/BiP. In unstressed cells, acts as an adenylyltransferase by mediating AMPylation of HSPA5/BiP at 'Thr-518', thereby inactivating it. In response to endoplasmic reticulum stress, acts as a phosphodiesterase by mediating removal of ATP (de-AMPylation) from HSPA5/BiP at 'Thr-518', leading to restore HSPA5/BiP activity. Although it is able to AMPylate RhoA, Rac and Cdc42 Rho GTPases in vitro, Rho GTPases do not constitute physiological substrates. The sequence is that of Protein adenylyltransferase FICD from Homo sapiens (Human).